Here is a 233-residue protein sequence, read N- to C-terminus: Ubiquinone biosynthesis O-methyltransferase (233 aa).

Residues Arg-37, Gly-56, Asp-77, and Met-121 each contribute to the S-adenosyl-L-methionine site.

Belongs to the methyltransferase superfamily. UbiG/COQ3 family.

It carries out the reaction a 3-demethylubiquinol + S-adenosyl-L-methionine = a ubiquinol + S-adenosyl-L-homocysteine + H(+). It catalyses the reaction a 3-(all-trans-polyprenyl)benzene-1,2-diol + S-adenosyl-L-methionine = a 2-methoxy-6-(all-trans-polyprenyl)phenol + S-adenosyl-L-homocysteine + H(+). It participates in cofactor biosynthesis; ubiquinone biosynthesis. O-methyltransferase that catalyzes the 2 O-methylation steps in the ubiquinone biosynthetic pathway. This Azoarcus sp. (strain BH72) protein is Ubiquinone biosynthesis O-methyltransferase.